Consider the following 154-residue polypeptide: Protein FasC (154 aa).

Belongs to the periplasmic pilus chaperone family.

Functionally, could be required for the biogenesis of a putative fimbria. This chain is Protein FasC (fasC), found in Escherichia coli.